The primary structure comprises 293 residues: Pyridoxal 5'-phosphate synthase subunit PdxS (293 aa).

Asp25 lines the D-ribose 5-phosphate pocket. Lys82 (schiff-base intermediate with D-ribose 5-phosphate) is an active-site residue. Gly154 is a D-ribose 5-phosphate binding site. Arg166 provides a ligand contact to D-glyceraldehyde 3-phosphate. Residues Gly215 and 236–237 (GS) each bind D-ribose 5-phosphate.

This sequence belongs to the PdxS/SNZ family. As to quaternary structure, in the presence of PdxT, forms a dodecamer of heterodimers.

The catalysed reaction is aldehydo-D-ribose 5-phosphate + D-glyceraldehyde 3-phosphate + L-glutamine = pyridoxal 5'-phosphate + L-glutamate + phosphate + 3 H2O + H(+). Its pathway is cofactor biosynthesis; pyridoxal 5'-phosphate biosynthesis. Catalyzes the formation of pyridoxal 5'-phosphate from ribose 5-phosphate (RBP), glyceraldehyde 3-phosphate (G3P) and ammonia. The ammonia is provided by the PdxT subunit. Can also use ribulose 5-phosphate and dihydroxyacetone phosphate as substrates, resulting from enzyme-catalyzed isomerization of RBP and G3P, respectively. The polypeptide is Pyridoxal 5'-phosphate synthase subunit PdxS (Thermotoga petrophila (strain ATCC BAA-488 / DSM 13995 / JCM 10881 / RKU-1)).